We begin with the raw amino-acid sequence, 485 residues long: Probable aspartic-type endopeptidase opsB (485 aa).

The first 20 residues, 1-20 (MRHIFSLLSIVCLMVKHGAC), serve as a signal peptide directing secretion. One can recognise a Peptidase A1 domain in the interval 69–397 (YFCNVTLGTP…DIANNEISIA (329 aa)). Asparagine 72 is a glycosylation site (N-linked (GlcNAc...) asparagine). The active site involves aspartate 87. Residues asparagine 99, asparagine 107, asparagine 111, and asparagine 132 are each glycosylated (N-linked (GlcNAc...) asparagine). Aspartate 285 is an active-site residue. N-linked (GlcNAc...) asparagine glycosylation is found at asparagine 328, asparagine 337, and asparagine 402. Residue serine 461 is the site of GPI-anchor amidated serine attachment. A propeptide spans 462-485 (AGVARADKQYLAIALIAVWFVLGL) (removed in mature form).

Belongs to the peptidase A1 family.

The protein localises to the cell membrane. Its function is as follows. Probable GPI-anchored aspartic-type endopeptidase which contributes to virulence. The polypeptide is Probable aspartic-type endopeptidase opsB (opsB) (Aspergillus fumigatus (strain ATCC MYA-4609 / CBS 101355 / FGSC A1100 / Af293) (Neosartorya fumigata)).